The sequence spans 170 residues: Putative calmodulin-like protein 6 (170 aa).

4 EF-hand domains span residues 8–43 (QQIS…LGMA), 44–79 (PSQE…KLYE), 84–119 (DDEE…LGEE), and 120–155 (MTED…TWNI). Positions 21, 23, 25, 27, 32, 57, 59, 61, 63, 68, 97, 99, 101, 108, 133, 135, 137, 139, and 144 each coordinate Ca(2+).

It belongs to the calmodulin family.

Potential calcium sensor. In Oryza sativa subsp. japonica (Rice), this protein is Putative calmodulin-like protein 6 (CML6).